The chain runs to 280 residues: F420-dependent methylenetetrahydromethanopterin dehydrogenase (280 aa).

It belongs to the MTD family.

The enzyme catalyses 5,10-methylenetetrahydromethanopterin + oxidized coenzyme F420-(gamma-L-Glu)(n) + 2 H(+) = 5,10-methenyl-5,6,7,8-tetrahydromethanopterin + reduced coenzyme F420-(gamma-L-Glu)(n). It functions in the pathway one-carbon metabolism; methanogenesis from CO(2); 5,10-methylene-5,6,7,8-tetrahydromethanopterin from 5,10-methenyl-5,6,7,8-tetrahydromethanopterin (coenzyme F420 route): step 1/1. In terms of biological role, catalyzes the reversible reduction of methenyl-H(4)MPT(+) to methylene-H(4)MPT. This is F420-dependent methylenetetrahydromethanopterin dehydrogenase from Methanoculleus marisnigri (strain ATCC 35101 / DSM 1498 / JR1).